We begin with the raw amino-acid sequence, 347 residues long: N-acetyl-gamma-glutamyl-phosphate reductase (347 aa).

Residue Cys-152 is part of the active site.

It belongs to the NAGSA dehydrogenase family. Type 1 subfamily.

Its subcellular location is the cytoplasm. The enzyme catalyses N-acetyl-L-glutamate 5-semialdehyde + phosphate + NADP(+) = N-acetyl-L-glutamyl 5-phosphate + NADPH + H(+). It participates in amino-acid biosynthesis; L-arginine biosynthesis; N(2)-acetyl-L-ornithine from L-glutamate: step 3/4. Catalyzes the NADPH-dependent reduction of N-acetyl-5-glutamyl phosphate to yield N-acetyl-L-glutamate 5-semialdehyde. The protein is N-acetyl-gamma-glutamyl-phosphate reductase of Neisseria meningitidis serogroup C / serotype 2a (strain ATCC 700532 / DSM 15464 / FAM18).